Here is a 118-residue protein sequence, read N- to C-terminus: Cell division protein FtsB (118 aa).

At 1-3 (MRL) the chain is on the cytoplasmic side. A helical transmembrane segment spans residues 4–21 (LFLVLLVLLGLIQYPLWL). Residues 22-118 (GKGGWFKVWD…PRPPATPPRR (97 aa)) lie on the Periplasmic side of the membrane. A coiled-coil region spans residues 28–62 (KVWDLQRQVAEQRETNDGLRARNTALEAEVRDLAT). Residues 88–118 (LPPGTPLPSDNSTPQASALSKPRPPATPPRR) are disordered. The span at 95-105 (PSDNSTPQASA) shows a compositional bias: polar residues. The span at 109–118 (PRPPATPPRR) shows a compositional bias: pro residues.

It belongs to the FtsB family. As to quaternary structure, part of a complex composed of FtsB, FtsL and FtsQ.

It localises to the cell inner membrane. In terms of biological role, essential cell division protein. May link together the upstream cell division proteins, which are predominantly cytoplasmic, with the downstream cell division proteins, which are predominantly periplasmic. In Bordetella bronchiseptica (strain ATCC BAA-588 / NCTC 13252 / RB50) (Alcaligenes bronchisepticus), this protein is Cell division protein FtsB.